The primary structure comprises 332 residues: Phosphoribosylformylglycinamidine cyclo-ligase (332 aa).

The protein belongs to the AIR synthase family.

The protein resides in the cytoplasm. The enzyme catalyses 2-formamido-N(1)-(5-O-phospho-beta-D-ribosyl)acetamidine + ATP = 5-amino-1-(5-phospho-beta-D-ribosyl)imidazole + ADP + phosphate + H(+). Its pathway is purine metabolism; IMP biosynthesis via de novo pathway; 5-amino-1-(5-phospho-D-ribosyl)imidazole from N(2)-formyl-N(1)-(5-phospho-D-ribosyl)glycinamide: step 2/2. The protein is Phosphoribosylformylglycinamidine cyclo-ligase of Clostridium acetobutylicum (strain ATCC 824 / DSM 792 / JCM 1419 / IAM 19013 / LMG 5710 / NBRC 13948 / NRRL B-527 / VKM B-1787 / 2291 / W).